The primary structure comprises 425 residues: uncharacterized protein (425 aa).

The region spanning 2–53 (SFNLLDLPIVPRQKALKYLEPIDLFELSLCSKRMAQSVRDLKIEASAHFITL) is the F-box domain.

This is an uncharacterized protein from Caenorhabditis elegans.